The primary structure comprises 398 residues: Cystathionine gamma-lyase (398 aa).

S50 is subject to Phosphoserine. Residues R61, Y113, and R118 each coordinate substrate. K211 carries the post-translational modification N6-(pyridoxal phosphate)lysine. E338 serves as a coordination point for substrate.

Belongs to the trans-sulfuration enzymes family. Homotetramer. Interacts with CALM in a calcium-dependent manner. It depends on pyridoxal 5'-phosphate as a cofactor.

It localises to the cytoplasm. It carries out the reaction L,L-cystathionine + H2O = 2-oxobutanoate + L-cysteine + NH4(+). It catalyses the reaction L-homoserine = 2-oxobutanoate + NH4(+). The enzyme catalyses L-selenocystathionine + H2O = L-selenocysteine + 2-oxobutanoate + NH4(+). The catalysed reaction is L-cysteine + H2O = hydrogen sulfide + pyruvate + NH4(+) + H(+). It carries out the reaction L-homocysteine + H2O = 2-oxobutanoate + hydrogen sulfide + NH4(+) + H(+). The protein operates within amino-acid biosynthesis; L-cysteine biosynthesis; L-cysteine from L-homocysteine and L-serine: step 2/2. Its function is as follows. Catalyzes the last step in the trans-sulfuration pathway from L-methionine to L-cysteine in a pyridoxal-5'-phosphate (PLP)-dependent manner, which consists on cleaving the L,L-cystathionine molecule into L-cysteine, ammonia and 2-oxobutanoate. Part of the L-cysteine derived from the trans-sulfuration pathway is utilized for biosynthesis of the ubiquitous antioxidant glutathione. Besides its role in the conversion of L-cystathionine into L-cysteine, it utilizes L-cysteine and L-homocysteine as substrates (at much lower rates than L,L-cystathionine) to produce hydrogen sulfide (H2S). In vitro, it converts two L-cysteine molecules into lanthionine and H2S, and two L-homocysteine molecules to homolanthionine and H2S, which can be particularly relevant under conditions of severe hyperhomocysteinemia. Lanthionine and homolanthionine are structural homologs of L,L-cystathionine that differ by the absence or presence of an extra methylene group, respectively. Acts as a cysteine-protein sulfhydrase by mediating sulfhydration of target proteins: sulfhydration consists of converting -SH groups into -SSH on specific cysteine residues of target proteins such as GAPDH, PTPN1 and NF-kappa-B subunit RELA, thereby regulating their function. By generating the gasotransmitter H2S, it participates in a number of physiological processes such as vasodilation, bone protection, and inflammation. Plays an essential role in myogenesis by contributing to the biogenesis of H2S in skeletal muscle tissue. Can also accept homoserine as substrate. Catalyzes the elimination of selenocystathionine (which can be derived from the diet) to yield selenocysteine, ammonia and 2-oxobutanoate. The chain is Cystathionine gamma-lyase (Cth) from Rattus norvegicus (Rat).